Here is a 246-residue protein sequence, read N- to C-terminus: Hydroxyacylglutathione hydrolase (246 aa).

Zn(2+) is bound by residues His-58, His-60, Asp-62, His-63, His-117, Asp-137, and His-175.

This sequence belongs to the metallo-beta-lactamase superfamily. Glyoxalase II family. As to quaternary structure, monomer. Requires Zn(2+) as cofactor.

The enzyme catalyses an S-(2-hydroxyacyl)glutathione + H2O = a 2-hydroxy carboxylate + glutathione + H(+). Its pathway is secondary metabolite metabolism; methylglyoxal degradation; (R)-lactate from methylglyoxal: step 2/2. Functionally, thiolesterase that catalyzes the hydrolysis of S-D-lactoyl-glutathione to form glutathione and D-lactic acid. This is Hydroxyacylglutathione hydrolase from Prochlorococcus marinus (strain MIT 9301).